Reading from the N-terminus, the 423-residue chain is Glucose-1-phosphate adenylyltransferase (423 aa).

Alpha-D-glucose 1-phosphate is bound by residues Tyr-112, Gly-177, 192–193 (EK), and Ser-210.

It belongs to the bacterial/plant glucose-1-phosphate adenylyltransferase family. In terms of assembly, homotetramer.

It catalyses the reaction alpha-D-glucose 1-phosphate + ATP + H(+) = ADP-alpha-D-glucose + diphosphate. It participates in glycan biosynthesis; glycogen biosynthesis. Functionally, involved in the biosynthesis of ADP-glucose, a building block required for the elongation reactions to produce glycogen. Catalyzes the reaction between ATP and alpha-D-glucose 1-phosphate (G1P) to produce pyrophosphate and ADP-Glc. In Rhodospirillum rubrum (strain ATCC 11170 / ATH 1.1.1 / DSM 467 / LMG 4362 / NCIMB 8255 / S1), this protein is Glucose-1-phosphate adenylyltransferase.